The primary structure comprises 181 residues: Cyclic AMP-dependent transcription factor ATF-3 (181 aa).

Lys78 participates in a covalent cross-link: Glycyl lysine isopeptide (Lys-Gly) (interchain with G-Cter in SUMO2). In terms of domain architecture, bZIP spans 86–149 (DERKKRRRER…QHLIYMLNLH (64 aa)). The basic motif stretch occupies residues 88 to 110 (RKKRRRERNKIAAAKCRNKKKEK). Residues 114–142 (LQKESEKLESVNAELKAQIEELKNEKQHL) form a leucine-zipper region. Position 162 is a phosphothreonine (Thr162). Lys175 is covalently cross-linked (Glycyl lysine isopeptide (Lys-Gly) (interchain with G-Cter in SUMO2)).

Belongs to the bZIP family. ATF subfamily. Binds DNA as a homodimer or a heterodimer. Interacts with KAT5; promoting KAT5 autoacetylation and KAT5 deubiquitination by USP7.

The protein localises to the nucleus. In terms of biological role, this protein binds the cAMP response element (CRE) (consensus: 5'-GTGACGT[AC][AG]-3'), a sequence present in many viral and cellular promoters. Represses transcription from promoters with ATF sites. It may repress transcription by stabilizing the binding of inhibitory cofactors at the promoter. Activates transcription presumably by sequestering inhibitory cofactors away from the promoters. Functionally, stress-induced isoform, counteracts the transcriptional repression of isoform 1. This is Cyclic AMP-dependent transcription factor ATF-3 from Homo sapiens (Human).